Reading from the N-terminus, the 392-residue chain is Cell division protein FtsZ (392 aa).

GTP is bound by residues 24–28 (GGGCN), 111–113 (GTG), glutamate 142, arginine 145, and aspartate 189.

The protein belongs to the FtsZ family. As to quaternary structure, homodimer. Polymerizes to form a dynamic ring structure in a strictly GTP-dependent manner. Interacts directly with several other division proteins.

The protein resides in the cytoplasm. Its function is as follows. Essential cell division protein that forms a contractile ring structure (Z ring) at the future cell division site. The regulation of the ring assembly controls the timing and the location of cell division. One of the functions of the FtsZ ring is to recruit other cell division proteins to the septum to produce a new cell wall between the dividing cells. Binds GTP and shows GTPase activity. The protein is Cell division protein FtsZ of Neisseria gonorrhoeae.